The primary structure comprises 168 residues: G/U mismatch-specific DNA glycosylase (168 aa).

Belongs to the uracil-DNA glycosylase (UDG) superfamily. TDG/mug family. Binds DNA as a monomer.

The protein resides in the cytoplasm. It catalyses the reaction Specifically hydrolyzes mismatched double-stranded DNA and polynucleotides, releasing free uracil.. In terms of biological role, excises ethenocytosine and uracil, which can arise by alkylation or deamination of cytosine, respectively, from the corresponding mispairs with guanine in ds-DNA. It is capable of hydrolyzing the carbon-nitrogen bond between the sugar-phosphate backbone of the DNA and the mispaired base. The complementary strand guanine functions in substrate recognition. Required for DNA damage lesion repair in stationary-phase cells. In Escherichia coli (strain UTI89 / UPEC), this protein is G/U mismatch-specific DNA glycosylase.